A 270-amino-acid polypeptide reads, in one-letter code: Cyclic pyranopterin monophosphate synthase, mitochondrial (270 aa).

A mitochondrion-targeting transit peptide spans 1–32; that stretch reads MISTLRRAVFLRRFPAVVSPIKRAFSSRIDDE. Substrate is bound by residues 187-189 and 225-226; these read LCH and ME. Asp-240 is an active-site residue.

It belongs to the MoaC family. In terms of assembly, homohexamer. Abundantly expressed in the roots.

It is found in the mitochondrion matrix. The enzyme catalyses (8S)-3',8-cyclo-7,8-dihydroguanosine 5'-triphosphate = cyclic pyranopterin phosphate + diphosphate. It functions in the pathway cofactor biosynthesis; molybdopterin biosynthesis. Catalyzes the conversion of (8S)-3',8-cyclo-7,8-dihydroguanosine 5'-triphosphate to cyclic pyranopterin monophosphate (cPMP). The chain is Cyclic pyranopterin monophosphate synthase, mitochondrial (CNX3) from Arabidopsis thaliana (Mouse-ear cress).